We begin with the raw amino-acid sequence, 148 residues long: 3-dehydroquinate dehydratase (148 aa).

Residue tyrosine 26 is the Proton acceptor of the active site. 3 residues coordinate substrate: asparagine 77, histidine 83, and aspartate 90. Histidine 103 acts as the Proton donor in catalysis. Residues leucine 104–serine 105 and arginine 114 each bind substrate.

This sequence belongs to the type-II 3-dehydroquinase family. In terms of assembly, homododecamer.

The catalysed reaction is 3-dehydroquinate = 3-dehydroshikimate + H2O. Its pathway is metabolic intermediate biosynthesis; chorismate biosynthesis; chorismate from D-erythrose 4-phosphate and phosphoenolpyruvate: step 3/7. Functionally, catalyzes a trans-dehydration via an enolate intermediate. This chain is 3-dehydroquinate dehydratase (aroQ), found in Pasteurella multocida (strain Pm70).